A 351-amino-acid chain; its full sequence is Protein RecA (351 aa).

ATP is bound at residue 68-75 (GPESSGKT).

It belongs to the RecA family.

It localises to the cytoplasm. In terms of biological role, can catalyze the hydrolysis of ATP in the presence of single-stranded DNA, the ATP-dependent uptake of single-stranded DNA by duplex DNA, and the ATP-dependent hybridization of homologous single-stranded DNAs. It interacts with LexA causing its activation and leading to its autocatalytic cleavage. The sequence is that of Protein RecA from Chloroflexus aurantiacus (strain ATCC 29364 / DSM 637 / Y-400-fl).